The chain runs to 691 residues: Methionine--tRNA ligase (691 aa).

The 'HIGH' region motif lies at 12-22 (PYANGSFHIGH). Residues Cys-143, Cys-146, Cys-156, and Cys-159 each contribute to the Zn(2+) site. The 'KMSKS' region signature appears at 341–345 (KMSKS). ATP is bound at residue Lys-344. One can recognise a tRNA-binding domain in the interval 585–691 (DFVKVDLRIA…PGAQPGMRIH (107 aa)).

It belongs to the class-I aminoacyl-tRNA synthetase family. MetG type 1 subfamily. As to quaternary structure, homodimer. Zn(2+) is required as a cofactor.

The protein resides in the cytoplasm. It catalyses the reaction tRNA(Met) + L-methionine + ATP = L-methionyl-tRNA(Met) + AMP + diphosphate. Its function is as follows. Is required not only for elongation of protein synthesis but also for the initiation of all mRNA translation through initiator tRNA(fMet) aminoacylation. This is Methionine--tRNA ligase from Bordetella avium (strain 197N).